The chain runs to 1069 residues: MPLNKDIKRVLVIGSGPIVIGQAAEFDYSGTQACEALKSEGVEVVLINSNPATIMTDKEVADKVYLEPLTLEFIEKVIAKEKPDSLLAGMGGQTGLNLAVELHDAGILDKYNVKVIGTSIESIKEGEDRELFRDMMNRIGEPVIKSEIVTDLQAGIDFANKIGYPVIVRPAYTLGGSGGGIADDEEELRTILESGLQLSTIGQVLLEKSVKGWKEIEYEVMRDSYGNCITVCNMENIDPVGIHTGDSIVVAPSQTLSDKEYQMLRTASINIINAVGIEGGCNVQFSLNPNTFEYAVIEINPRVSRSSALASKATGYPIAKLAAKIALGYGLDEIKNAVTQKTYACFEPTLDYVVVKIPKWPFDKFFGADRQLGTKMMATGEIMAIGANFEQAFLKGIRSLEIGKYSLDHKKFKEHSMSELKDLVMKPDDERIFALAEMLRRDYMIERINKITGIDKFFLEKIKWIVEEEQRLKLSNIEDLDKEWLKNLKKKGFSDKAIADMLKVSPEDIYRLRDIWSIKPSYKMVDTCGGEFEALSPYYYSTYEQYDEVEVSNRRKVIVIGSGPIRIGQGIEFDYASVHCVKALKKLDIETIIVNNNPETVSTDFDISDKLYFEPLTEEDVLNIIEKENPYGVILQFGGQTAIKLANFLKEKNIKTLGTTADQIDMAEDREKFDELLERLDISRPKGKGIWSVEEGLEEAERLGFPVLVRPSYVIGGQGMEITHDEEELTFYLTNAFAKDKKNPILIDKYLMGREIEVDAISDGENILIPGIMEHLERAGVHSGDSVTMYPSQNVCDKIKGKILEYTKKLALAIGIKGMINIQFIEFEGSLYVIEVNPRASRTVPYISKVSGVPIVDIATQVMLGAKLNDLGYGVDIYKEPELISVKVPVFSTQKLPNVEVCLGPEMRSTGEVLGVGRTLKEALYKGFVGANMYPSKEKGKILATINKHNKAEFLPIAKDLAKVGYKFIATTGTCKLLRDEGIDAEEIRKIDEEKPNILDIVKNREVDLVVNTPTKGNDSKRDGFLIRRAAVERNLGVITALDTLRAIADVELEEFDKNKDLEVFDITK.

Residues 1 to 401 (MPLNKDIKRV…AFLKGIRSLE (401 aa)) form a carboxyphosphate synthetic domain region. Residues Arg129, Arg169, Gly175, Gly176, Lys208, Val210, Glu215, Gly241, Ile242, His243, Gln284, and Glu298 each contribute to the ATP site. The 195-residue stretch at 133–327 (RDMMNRIGEP…IAKLAAKIAL (195 aa)) folds into the ATP-grasp 1 domain. Mg(2+) contacts are provided by Gln284, Glu298, and Asn300. Mn(2+) is bound by residues Gln284, Glu298, and Asn300. Residues 402–549 (IGKYSLDHKK…YSTYEQYDEV (148 aa)) form an oligomerization domain region. The interval 550–932 (EVSNRRKVIV…ALYKGFVGAN (383 aa)) is carbamoyl phosphate synthetic domain. In terms of domain architecture, ATP-grasp 2 spans 674 to 864 (DELLERLDIS…IVDIATQVML (191 aa)). 10 residues coordinate ATP: Arg710, Lys749, Leu751, Glu755, Gly780, Val781, His782, Ser783, Gln823, and Glu835. 3 residues coordinate Mg(2+): Gln823, Glu835, and Asn837. Mn(2+) contacts are provided by Gln823, Glu835, and Asn837. The 138-residue stretch at 932-1069 (NMYPSKEKGK…KDLEVFDITK (138 aa)) folds into the MGS-like domain. Residues 933–1069 (MYPSKEKGKI…KDLEVFDITK (137 aa)) form an allosteric domain region.

This sequence belongs to the CarB family. Composed of two chains; the small (or glutamine) chain promotes the hydrolysis of glutamine to ammonia, which is used by the large (or ammonia) chain to synthesize carbamoyl phosphate. Tetramer of heterodimers (alpha,beta)4. Mg(2+) is required as a cofactor. The cofactor is Mn(2+).

The catalysed reaction is hydrogencarbonate + L-glutamine + 2 ATP + H2O = carbamoyl phosphate + L-glutamate + 2 ADP + phosphate + 2 H(+). It carries out the reaction hydrogencarbonate + NH4(+) + 2 ATP = carbamoyl phosphate + 2 ADP + phosphate + 2 H(+). Its pathway is amino-acid biosynthesis; L-arginine biosynthesis; carbamoyl phosphate from bicarbonate: step 1/1. It functions in the pathway pyrimidine metabolism; UMP biosynthesis via de novo pathway; (S)-dihydroorotate from bicarbonate: step 1/3. Its function is as follows. Large subunit of the glutamine-dependent carbamoyl phosphate synthetase (CPSase). CPSase catalyzes the formation of carbamoyl phosphate from the ammonia moiety of glutamine, carbonate, and phosphate donated by ATP, constituting the first step of 2 biosynthetic pathways, one leading to arginine and/or urea and the other to pyrimidine nucleotides. The large subunit (synthetase) binds the substrates ammonia (free or transferred from glutamine from the small subunit), hydrogencarbonate and ATP and carries out an ATP-coupled ligase reaction, activating hydrogencarbonate by forming carboxy phosphate which reacts with ammonia to form carbamoyl phosphate. The chain is Carbamoyl phosphate synthase large chain from Clostridium botulinum (strain Alaska E43 / Type E3).